The chain runs to 196 residues: GTP cyclohydrolase 1 (196 aa).

The Zn(2+) site is built by cysteine 84, histidine 87, and cysteine 157.

Belongs to the GTP cyclohydrolase I family. In terms of assembly, toroid-shaped homodecamer, composed of two pentamers of five dimers.

It catalyses the reaction GTP + H2O = 7,8-dihydroneopterin 3'-triphosphate + formate + H(+). The protein operates within cofactor biosynthesis; 7,8-dihydroneopterin triphosphate biosynthesis; 7,8-dihydroneopterin triphosphate from GTP: step 1/1. The protein is GTP cyclohydrolase 1 of Corynebacterium glutamicum (strain ATCC 13032 / DSM 20300 / JCM 1318 / BCRC 11384 / CCUG 27702 / LMG 3730 / NBRC 12168 / NCIMB 10025 / NRRL B-2784 / 534).